A 215-amino-acid chain; its full sequence is Fibroblast growth factor 10 (215 aa).

A signal peptide spans 1–36 (MWKWILTHCASAFPHLPGCCCCFLLLFLVSSVPVTC). Positions 49 to 73 (TNSSSSSSSSSSSSSFSSPSSAGRH) are disordered. Asn50 is a glycosylation site (N-linked (GlcNAc...) asparagine). The segment covering 51–69 (SSSSSSSSSSSSSFSSPSS) has biased composition (low complexity). Asn203 carries an N-linked (GlcNAc...) asparagine glycan.

Belongs to the heparin-binding growth factors family. In terms of assembly, interacts with FGFR1 and FGFR2. Interacts with FGFBP1. Preferentially expressed in the lung in adults.

It localises to the secreted. In terms of biological role, plays an important role in the regulation of embryonic development, cell proliferation and cell differentiation. Required for normal branching morphogenesis. May play a role in wound healing. The polypeptide is Fibroblast growth factor 10 (Fgf10) (Rattus norvegicus (Rat)).